The following is a 482-amino-acid chain: Glutamyl-tRNA(Gln) amidotransferase subunit A (482 aa).

Catalysis depends on charge relay system residues Lys-74 and Ser-149. The Acyl-ester intermediate role is filled by Ser-173.

The protein belongs to the amidase family. GatA subfamily. Heterotrimer of A, B and C subunits.

The enzyme catalyses L-glutamyl-tRNA(Gln) + L-glutamine + ATP + H2O = L-glutaminyl-tRNA(Gln) + L-glutamate + ADP + phosphate + H(+). Its function is as follows. Allows the formation of correctly charged Gln-tRNA(Gln) through the transamidation of misacylated Glu-tRNA(Gln) in organisms which lack glutaminyl-tRNA synthetase. The reaction takes place in the presence of glutamine and ATP through an activated gamma-phospho-Glu-tRNA(Gln). This is Glutamyl-tRNA(Gln) amidotransferase subunit A from Prochlorococcus marinus (strain MIT 9215).